Reading from the N-terminus, the 91-residue chain is Small ribosomal subunit protein uS19 (91 aa).

The protein belongs to the universal ribosomal protein uS19 family.

Its function is as follows. Protein S19 forms a complex with S13 that binds strongly to the 16S ribosomal RNA. This is Small ribosomal subunit protein uS19 from Pseudomonas syringae pv. tomato (strain ATCC BAA-871 / DC3000).